A 404-amino-acid polypeptide reads, in one-letter code: Cysteine desulfurase IscS (404 aa).

Pyridoxal 5'-phosphate is bound by residues 75–76, asparagine 155, glutamine 183, and 203–205; these read AT and SAH. At lysine 206 the chain carries N6-(pyridoxal phosphate)lysine. Threonine 243 serves as a coordination point for pyridoxal 5'-phosphate. The active-site Cysteine persulfide intermediate is the cysteine 328. Cysteine 328 contacts [2Fe-2S] cluster.

This sequence belongs to the class-V pyridoxal-phosphate-dependent aminotransferase family. NifS/IscS subfamily. Homodimer. Forms a heterotetramer with IscU, interacts with other sulfur acceptors. The cofactor is pyridoxal 5'-phosphate.

It is found in the cytoplasm. It carries out the reaction (sulfur carrier)-H + L-cysteine = (sulfur carrier)-SH + L-alanine. The protein operates within cofactor biosynthesis; iron-sulfur cluster biosynthesis. Master enzyme that delivers sulfur to a number of partners involved in Fe-S cluster assembly, tRNA modification or cofactor biosynthesis. Catalyzes the removal of elemental sulfur atoms from cysteine to produce alanine. Functions as a sulfur delivery protein for Fe-S cluster synthesis onto IscU, an Fe-S scaffold assembly protein, as well as other S acceptor proteins. This chain is Cysteine desulfurase IscS, found in Stutzerimonas stutzeri (strain A1501) (Pseudomonas stutzeri).